A 383-amino-acid chain; its full sequence is Transcription factor Y1 (383 aa).

HTH myb-type domains are found at residues 9–61 (KVGL…INYL) and 62–116 (RADV…SRQI). DNA-binding regions (H-T-H motif) lie at residues 37 to 61 (WRSL…INYL) and 89 to 112 (WSLI…NSHL). The disordered stretch occupies residues 136–250 (SKLHSAEKRR…DATGPWELDP (115 aa)). Composition is skewed to low complexity over residues 155–170 (KSSS…SSKT) and 191–207 (ASSP…ASSP).

The protein localises to the nucleus. It participates in pigment biosynthesis. Transcription factor involved in regulating the biosynthetic pathway of flavan-4-ol-derived red phlobaphene and red-brown 3-deoxyanthocyanidin (3-DA) pigments. Regulates transcription of chalcone synthase, chalcone isomerase, dihydroflavonol reductase and flavonoid 3'-hydroxylase genes required for the phlobaphene and 3-DA biosynthesis. Transcription of these genes is activated in mesocotyls in response to ingress of non-pathogenic fungus C.heterostrophus. Regulates the production of 3-DA phytoalexins (luteolinidin, 5-methoxyluteolinidin, apigeninidin and 7-methoxyapigeninidin) in mesocotyls in response to C.heterostrophus and corn leaf aphid (CLA) R.maidis. Involved in resistance against anthracnose leaf blight (ALB) caused by the pathogenic C.sublineolum fungus by inducing the production of 3-DA phytoalexins. Confers resistance, also by inducing the production of 3-DA phytoalexins, against CLA R.maidis, which is an insect and a pest. The sequence is that of Transcription factor Y1 from Sorghum bicolor (Sorghum).